We begin with the raw amino-acid sequence, 470 residues long: Neuraminidase (470 aa).

Residues 1–6 (MNPNQK) are Intravirion-facing. The helical transmembrane segment at 7–27 (LFALSGVAIALSIFNLLIGIS) threads the bilayer. Positions 11–33 (SGVAIALSIFNLLIGISNVVLNV) are involved in apical transport and lipid raft association. At 28–470 (NVVLNVSLHL…PDGAQIQYFS (443 aa)) the chain is on the virion surface side. N-linked (GlcNAc...) asparagine; by host glycans are attached at residues Asn-32, Asn-46, Asn-55, Asn-56, Asn-66, Asn-67, and Asn-86. The hypervariable stalk region stretch occupies residues 36 to 86 (HLKNNNDQDKNWTCTSITQNNTTLIENTYVNNTTVINKETEAAKQNYLMLN). The head of neuraminidase stretch occupies residues 89 to 470 (LCKVEGWVVV…PDGAQIQYFS (382 aa)). 8 cysteine pairs are disulfide-bonded: Cys-90-Cys-418, Cys-122-Cys-127, Cys-182-Cys-229, Cys-231-Cys-236, Cys-277-Cys-290, Cys-279-Cys-288, Cys-317-Cys-335, and Cys-422-Cys-449. Residue Arg-116 coordinates substrate. N-linked (GlcNAc...) asparagine; by host glycosylation occurs at Asn-144. The active-site Proton donor/acceptor is Asp-149. Substrate is bound at residue Arg-150. N-linked (GlcNAc...) asparagine; by host glycans are attached at residues Asn-199 and Asn-233. 275–276 (EE) lines the substrate pocket. A substrate-binding site is contributed by Arg-291. 3 residues coordinate Ca(2+): Asp-292, Gly-296, and Asp-323. Arg-370 contacts substrate. N-linked (GlcNAc...) asparagine; by host glycosylation is present at Asn-400. Tyr-404 acts as the Nucleophile in catalysis.

Belongs to the glycosyl hydrolase 34 family. Homotetramer. It depends on Ca(2+) as a cofactor. Post-translationally, N-glycosylated.

The protein resides in the virion membrane. The protein localises to the host apical cell membrane. The enzyme catalyses Hydrolysis of alpha-(2-&gt;3)-, alpha-(2-&gt;6)-, alpha-(2-&gt;8)- glycosidic linkages of terminal sialic acid residues in oligosaccharides, glycoproteins, glycolipids, colominic acid and synthetic substrates.. Its activity is regulated as follows. Inhibited by the neuraminidase inhibitors zanamivir (Relenza) and oseltamivir (Tamiflu). These drugs interfere with the release of progeny virus from infected cells and are effective against all influenza strains. Resistance to neuraminidase inhibitors is quite rare. Functionally, catalyzes the removal of terminal sialic acid residues from viral and cellular glycoconjugates. Cleaves off the terminal sialic acids on the glycosylated HA during virus budding to facilitate virus release. Additionally helps virus spread through the circulation by further removing sialic acids from the cell surface. These cleavages prevent self-aggregation and ensure the efficient spread of the progeny virus from cell to cell. Otherwise, infection would be limited to one round of replication. Described as a receptor-destroying enzyme because it cleaves a terminal sialic acid from the cellular receptors. May facilitate viral invasion of the upper airways by cleaving the sialic acid moieties on the mucin of the airway epithelial cells. Likely to plays a role in the budding process through its association with lipid rafts during intracellular transport. May additionally display a raft-association independent effect on budding. Plays a role in the determination of host range restriction on replication and virulence. Sialidase activity in late endosome/lysosome traffic seems to enhance virus replication. This chain is Neuraminidase, found in Aves (Horse).